The sequence spans 59 residues: uncharacterized protein (59 aa).

Positions 1–21 (MYLFYVLLSSLFLSALIYVIG) are cleaved as a signal peptide. Topologically, residues 22–24 (KSH) are extracellular. The chain crosses the membrane as a helical span at residues 25–45 (PNLFMFISLFVNVVTILYLVF). Residues 46-59 (KDYGQYIIAKPINT) lie on the Cytoplasmic side of the membrane.

It localises to the host membrane. This is an uncharacterized protein from Acidianus convivator (ABV).